A 297-amino-acid chain; its full sequence is HTH-type transcriptional regulator ArgP (297 aa).

One can recognise an HTH lysR-type domain in the interval 4 to 60 (PDYRTLQALDAVIRERGFERAAQKLCITQSAVSQRIKQLENMFGQPLLVRTVPPRPT). A DNA-binding region (H-T-H motif) is located at residues 21-40 (FERAAQKLCITQSAVSQRIK).

The protein belongs to the LysR transcriptional regulatory family. Homodimer.

Functionally, controls the transcription of genes involved in arginine and lysine metabolism. In Enterobacter sp. (strain 638), this protein is HTH-type transcriptional regulator ArgP.